The following is a 354-amino-acid chain: Transcription factor ATOH1 (354 aa).

Positions 1–21 (MSRLLHAEEWAEVKELGDHHR) are enriched in basic and acidic residues. Disordered stretches follow at residues 1–55 (MSRL…ELSL) and 91–122 (EAAA…PGPV). A compositionally biased stretch (pro residues) spans 26-38 (HHLPQPPPPPQPP). Basic and acidic residues predominate over residues 94–107 (APRDEVDGRGELVR). Residues 108–122 (RSSGGASSSKSPGPV) show a composition bias toward low complexity. The 53-residue stretch at 159-211 (QRRLAANARERRRMHGLNHAFDQLRNVIPSFNNDKKLSKYETLQMAQIYINAL) folds into the bHLH domain. 2 disordered regions span residues 216–277 (QTPS…TRFS) and 312–354 (SPSL…DEAS). The segment covering 250 to 264 (NATAAGAQQASGGSQ) has biased composition (low complexity). The span at 335–354 (HRSDGEFSPHSHYSDSDEAS) shows a compositional bias: basic and acidic residues.

Efficient DNA binding requires dimerization with another bHLH protein.

It localises to the nucleus. Transcriptional regulator. Activates E box-dependent transcription in collaboration with TCF3/E47, but the activity is completely antagonized by the negative regulator of neurogenesis HES1. Plays a role in the differentiation of subsets of neural cells by activating E box-dependent transcription. The polypeptide is Transcription factor ATOH1 (Homo sapiens (Human)).